A 516-amino-acid polypeptide reads, in one-letter code: uncharacterized protein (516 aa).

This is an uncharacterized protein from Azotobacter chroococcum mcd 1.